The sequence spans 259 residues: 4-hydroxy-tetrahydrodipicolinate reductase (259 aa).

NAD(+)-binding positions include 9 to 14 (GAGGRM) and glutamate 35. An NADP(+)-binding site is contributed by arginine 36. NAD(+) is bound by residues 92–94 (GTT) and 116–119 (APNM). Histidine 149 functions as the Proton donor/acceptor in the catalytic mechanism. Residue histidine 150 participates in (S)-2,3,4,5-tetrahydrodipicolinate binding. Lysine 153 acts as the Proton donor in catalysis. Residue 159–160 (GT) participates in (S)-2,3,4,5-tetrahydrodipicolinate binding.

Belongs to the DapB family.

It localises to the cytoplasm. It carries out the reaction (S)-2,3,4,5-tetrahydrodipicolinate + NAD(+) + H2O = (2S,4S)-4-hydroxy-2,3,4,5-tetrahydrodipicolinate + NADH + H(+). The catalysed reaction is (S)-2,3,4,5-tetrahydrodipicolinate + NADP(+) + H2O = (2S,4S)-4-hydroxy-2,3,4,5-tetrahydrodipicolinate + NADPH + H(+). The protein operates within amino-acid biosynthesis; L-lysine biosynthesis via DAP pathway; (S)-tetrahydrodipicolinate from L-aspartate: step 4/4. Its function is as follows. Catalyzes the conversion of 4-hydroxy-tetrahydrodipicolinate (HTPA) to tetrahydrodipicolinate. The protein is 4-hydroxy-tetrahydrodipicolinate reductase of Nitratidesulfovibrio vulgaris (strain DSM 19637 / Miyazaki F) (Desulfovibrio vulgaris).